Reading from the N-terminus, the 393-residue chain is Na(+)/H(+) antiporter NhaA (393 aa).

Helical transmembrane passes span 24–44 (GGLVLMAVALAAIVTANSPLA), 58–78 (LSLLHWINDALMALFFLLVGL), 96–116 (ILPGAAALGGMLFPALFYILF), 126–146 (GWAIPTATDIAFALGVISLFG), 155–175 (IFLAALAIIDDLGAVVIIALF), 178–198 (SDLNLLALAAAAAVLAALYGM), 214–234 (AVLWVLVFASGIHATLAGVLL), 267–287 (VAFIVVPIFGFANAGVSFSGV), 300–320 (VAAGLLLGKLVGVLSTVFLLV), 338–358 (GVAALCGIGFTMSLFIGLLAF), and 369–389 (MGILLGSLLSGLVGAAMLATF).

Belongs to the NhaA Na(+)/H(+) (TC 2.A.33) antiporter family.

Its subcellular location is the cell inner membrane. It catalyses the reaction Na(+)(in) + 2 H(+)(out) = Na(+)(out) + 2 H(+)(in). Na(+)/H(+) antiporter that extrudes sodium in exchange for external protons. The polypeptide is Na(+)/H(+) antiporter NhaA (Rhizobium etli (strain ATCC 51251 / DSM 11541 / JCM 21823 / NBRC 15573 / CFN 42)).